A 72-amino-acid polypeptide reads, in one-letter code: UPF0352 protein HI_0840 (72 aa).

Belongs to the UPF0352 family.

This Haemophilus influenzae (strain ATCC 51907 / DSM 11121 / KW20 / Rd) protein is UPF0352 protein HI_0840.